Here is a 158-residue protein sequence, read N- to C-terminus: Cyclic pyranopterin monophosphate synthase (158 aa).

Residues 76-78 (LCH) and 114-115 (ME) contribute to the substrate site. Aspartate 129 is an active-site residue.

This sequence belongs to the MoaC family. As to quaternary structure, homohexamer; trimer of dimers.

The catalysed reaction is (8S)-3',8-cyclo-7,8-dihydroguanosine 5'-triphosphate = cyclic pyranopterin phosphate + diphosphate. The protein operates within cofactor biosynthesis; molybdopterin biosynthesis. Catalyzes the conversion of (8S)-3',8-cyclo-7,8-dihydroguanosine 5'-triphosphate to cyclic pyranopterin monophosphate (cPMP). The chain is Cyclic pyranopterin monophosphate synthase from Shewanella woodyi (strain ATCC 51908 / MS32).